A 318-amino-acid polypeptide reads, in one-letter code: tRNA uridine(34) hydroxylase (318 aa).

The Rhodanese domain occupies Gln-125–Lys-219. Cys-179 serves as the catalytic Cysteine persulfide intermediate.

This sequence belongs to the TrhO family.

The enzyme catalyses uridine(34) in tRNA + AH2 + O2 = 5-hydroxyuridine(34) in tRNA + A + H2O. In terms of biological role, catalyzes oxygen-dependent 5-hydroxyuridine (ho5U) modification at position 34 in tRNAs. The sequence is that of tRNA uridine(34) hydroxylase from Acholeplasma laidlawii (strain PG-8A).